A 287-amino-acid polypeptide reads, in one-letter code: Cbb3-type cytochrome c oxidase subunit FixPc (287 aa).

The Cytoplasmic segment spans residues 1-36 (MSEKHIDEFSGVETTGHEWDGIRELNNPMPRWWVWT). Residues 37–57 (FYATIVWALGYAIAYPAIPMI) form a helical membrane-spanning segment. Topologically, residues 58-287 (TDATKGMLGF…IFVHSLGGGT (230 aa)) are periplasmic. Cytochrome c domains lie at 108–196 (FAIA…WGLT) and 203–284 (GLAE…HSLG). Cysteine 121, cysteine 124, histidine 125, methionine 173, cysteine 216, cysteine 219, histidine 220, and methionine 261 together coordinate heme c.

The protein belongs to the CcoP / FixP family. As to quaternary structure, component of the cbb3-type cytochrome c oxidase at least composed of FixN, FixO, FixQ and FixP. Heme c serves as cofactor.

It localises to the cell inner membrane. It participates in energy metabolism; oxidative phosphorylation. In terms of biological role, C-type cytochrome. Part of the cbb3-type cytochrome c oxidase complex. FixP subunit is required for transferring electrons from donor cytochrome c via its heme groups to FixO subunit. From there, electrons are shuttled to the catalytic binuclear center of FixN subunit where oxygen reduction takes place. The complex also functions as a proton pump. The chain is Cbb3-type cytochrome c oxidase subunit FixPc from Rhizobium leguminosarum bv. viciae.